A 130-amino-acid polypeptide reads, in one-letter code: Small ribosomal subunit protein uS11c (130 aa).

Belongs to the universal ribosomal protein uS11 family. As to quaternary structure, part of the 30S ribosomal subunit.

It localises to the plastid. Its subcellular location is the chloroplast. The protein is Small ribosomal subunit protein uS11c of Chara vulgaris (Common stonewort).